A 348-amino-acid polypeptide reads, in one-letter code: Rhodopsin (348 aa).

Residue methionine 1 is modified to N-acetylmethionine. At 1–36 the chain is on the extracellular side; sequence MNGTEGPNFYVPYSNKSGVVRSPYEEPQYYLAEPWM. 2 N-linked (GlcNAc...) asparagine glycosylation sites follow: asparagine 2 and asparagine 15. A helical transmembrane segment spans residues 37–61; sequence FSCLAAYMFMLIVLGFPINFLTLYV. Topologically, residues 62–73 are cytoplasmic; sequence TIQHKKLRTPLN. Residues 74–96 traverse the membrane as a helical segment; that stretch reads YILLNLAVADLFMVICGFTTTLV. At 97 to 110 the chain is on the extracellular side; that stretch reads TSLNGYFVFGTTGC. Cysteine 110 and cysteine 187 form a disulfide bridge. A helical transmembrane segment spans residues 111–133; that stretch reads LVEGFFATTGGEVALWALVVLAI. The short motif at 134–136 is the 'Ionic lock' involved in activated form stabilization element; that stretch reads ERY. Residues 134-152 lie on the Cytoplasmic side of the membrane; sequence ERYIVVCKPMSNFRFGENH. The helical transmembrane segment at 153-173 threads the bilayer; sequence AIMGVAFTWIMALACSVPPIF. The Extracellular portion of the chain corresponds to 174-202; that stretch reads GWSRYIPEGMQCSCGIDYYTLNPEFNNES. Glutamate 201 contributes to the Zn(2+) binding site. A helical transmembrane segment spans residues 203 to 224; the sequence is FVIYMFVVHFIIPLTVIFFCYG. The Cytoplasmic segment spans residues 225-252; the sequence is QLVFTVKEAAAQQQESATTQKAEKEVTR. A helical membrane pass occupies residues 253 to 274; that stretch reads MVIIMVIAFLICWVPYASVAFY. The Extracellular portion of the chain corresponds to 275–286; sequence IFTHQGSDFGPI. Glutamine 279 is a Zn(2+) binding site. Residues 287–308 form a helical membrane-spanning segment; sequence FMTLPAFFAKSSSIYNPVIYIM. Lysine 296 bears the N6-(retinylidene)lysine mark. At 309 to 348 the chain is on the cytoplasmic side; that stretch reads MNKQFRNCMITTLCCGKNPLGDDEASTTASKTETSQVAPA. S-palmitoyl cysteine attachment occurs at residues cysteine 322 and cysteine 323. Positions 330–348 are interaction with SAG; it reads DDEASTTASKTETSQVAPA. Residue serine 334 is modified to Phosphoserine. Residues threonine 335 and threonine 336 each carry the phosphothreonine modification. Serine 338 bears the Phosphoserine mark. Residues threonine 340 and threonine 342 each carry the phosphothreonine modification. Position 343 is a phosphoserine (serine 343).

Belongs to the G-protein coupled receptor 1 family. Opsin subfamily. In terms of assembly, homodimer. May form a complex composed of RHO, GRK1 and RCVRN in a Ca(2+)-dependent manner; RCVRN prevents the interaction between GRK1 and RHO. Interacts with GRK1. Interacts (phosphorylated form) with SAG. Interacts with GNAT1. Interacts with GNAT3. SAG and G-proteins compete for a common binding site. Interacts with PRCD; the interaction promotes PRCD stability. Forms a complex with ASAP1 and ARF4. Forms a complex with ASAP1, RAB11A, Rabin8/RAB3IP, ARF4 and RAB11FIP3; the complex regulates Golgi-to-cilia rhodopsin/RHO transport in photoreceptors. In terms of processing, phosphorylated on some or all of the serine and threonine residues present in the C-terminal region. Contains one covalently linked retinal chromophore. Upon light absorption, the covalently bound 11-cis-retinal is converted to all-trans-retinal. After hydrolysis of the Schiff base and release of the covalently bound all-trans-retinal, active rhodopsin is regenerated by binding of a fresh molecule of 11-cis-retinal.

Its subcellular location is the membrane. The protein localises to the cell projection. The protein resides in the cilium. It localises to the photoreceptor outer segment. In terms of biological role, photoreceptor required for image-forming vision at low light intensity. Required for photoreceptor cell viability after birth. Light-induced isomerization of 11-cis to all-trans retinal triggers a conformational change that activates signaling via G-proteins. Subsequent receptor phosphorylation mediates displacement of the bound G-protein alpha subunit by the arrestin SAG and terminates signaling. The polypeptide is Rhodopsin (RHO) (Sminthopsis crassicaudata (Fat-tailed dunnart)).